Consider the following 246-residue polypeptide: Small ribosomal subunit protein uS2 (246 aa).

The protein belongs to the universal ribosomal protein uS2 family.

This Burkholderia cenocepacia (strain ATCC BAA-245 / DSM 16553 / LMG 16656 / NCTC 13227 / J2315 / CF5610) (Burkholderia cepacia (strain J2315)) protein is Small ribosomal subunit protein uS2.